Here is a 212-residue protein sequence, read N- to C-terminus: Ribosomal RNA small subunit methyltransferase G (212 aa).

Residues G80, L85, 131-132 (AE), and R146 each bind S-adenosyl-L-methionine.

This sequence belongs to the methyltransferase superfamily. RNA methyltransferase RsmG family.

It localises to the cytoplasm. The enzyme catalyses guanosine(527) in 16S rRNA + S-adenosyl-L-methionine = N(7)-methylguanosine(527) in 16S rRNA + S-adenosyl-L-homocysteine. Its function is as follows. Specifically methylates the N7 position of guanine in position 527 of 16S rRNA. The polypeptide is Ribosomal RNA small subunit methyltransferase G (Stenotrophomonas maltophilia (strain R551-3)).